A 545-amino-acid chain; its full sequence is Chaperonin GroEL (545 aa).

ATP is bound by residues 30–33, Lys51, 87–91, Gly415, 479–481, and Asp495; these read TLGP, DGTTT, and NAA.

This sequence belongs to the chaperonin (HSP60) family. In terms of assembly, forms a cylinder of 14 subunits composed of two heptameric rings stacked back-to-back. Interacts with the co-chaperonin GroES.

It is found in the cytoplasm. It carries out the reaction ATP + H2O + a folded polypeptide = ADP + phosphate + an unfolded polypeptide.. Together with its co-chaperonin GroES, plays an essential role in assisting protein folding. The GroEL-GroES system forms a nano-cage that allows encapsulation of the non-native substrate proteins and provides a physical environment optimized to promote and accelerate protein folding. The sequence is that of Chaperonin GroEL from Cellvibrio japonicus (strain Ueda107) (Pseudomonas fluorescens subsp. cellulosa).